The following is a 547-amino-acid chain: Chaperonin GroEL 2 (547 aa).

Residues 29-32 (TLGP), 86-90 (DGTTT), Gly-418, 482-484 (NAA), and Asp-498 each bind ATP.

This sequence belongs to the chaperonin (HSP60) family. As to quaternary structure, forms a cylinder of 14 subunits composed of two heptameric rings stacked back-to-back. Interacts with the co-chaperonin GroES.

It is found in the cytoplasm. It carries out the reaction ATP + H2O + a folded polypeptide = ADP + phosphate + an unfolded polypeptide.. Together with its co-chaperonin GroES, plays an essential role in assisting protein folding. The GroEL-GroES system forms a nano-cage that allows encapsulation of the non-native substrate proteins and provides a physical environment optimized to promote and accelerate protein folding. The chain is Chaperonin GroEL 2 from Corynebacterium efficiens (strain DSM 44549 / YS-314 / AJ 12310 / JCM 11189 / NBRC 100395).